A 163-amino-acid chain; its full sequence is Protein-export protein SecB (163 aa).

It belongs to the SecB family. As to quaternary structure, homotetramer, a dimer of dimers. One homotetramer interacts with 1 SecA dimer.

The protein resides in the cytoplasm. In terms of biological role, one of the proteins required for the normal export of preproteins out of the cell cytoplasm. It is a molecular chaperone that binds to a subset of precursor proteins, maintaining them in a translocation-competent state. It also specifically binds to its receptor SecA. This is Protein-export protein SecB from Shewanella woodyi (strain ATCC 51908 / MS32).